Here is a 356-residue protein sequence, read N- to C-terminus: MTTFHSLTVAKVESETRDAVTITFAVPQPLQEAYRFRPGQHLTLKASFDGEELRRCYSICRSYLPGEISVAVKAIEGGRFSRYAREHIRQGMTLEVMVPQGHFGYQPQAERQGRYLAIAAGSGITPMLAIIATTLQTEPESQFTLIYGNRTSQSMMFRQALADLKDKYPQRLQLLCIFSQETLDSDLLHGRIDGEKLQSLGASLINFRLYDEAFICGPAAMMDDAETALKALGMPDKTIHLERFNTPGTRVKRSVNVQSDGQKVTVRQDGRDREIVLNADDESILDAALRQGADLPYACKGGVCATCKCKVLRGKVAMETNYSLEPDELAAGYVLSCQALPLTSDVVVDFDAKGMA.

The region spanning 2 to 106 is the FAD-binding FR-type domain; sequence TTFHSLTVAK…MVPQGHFGYQ (105 aa). The oxidoreductase stretch occupies residues 112-228; sequence QGRYLAIAAG…AAMMDDAETA (117 aa). The 2Fe-2S ferredoxin-type domain maps to 262-354; the sequence is QKVTVRQDGR…DVVVDFDAKG (93 aa). Residues Cys-299, Cys-304, Cys-307, and Cys-337 each coordinate [2Fe-2S] cluster.

In the N-terminal section; belongs to the FAD-binding oxidoreductase type 6 family. The cofactor is [2Fe-2S] cluster. FAD serves as cofactor.

It functions in the pathway aromatic compound metabolism; phenylacetate degradation. In terms of biological role, component of 1,2-phenylacetyl-CoA epoxidase multicomponent enzyme system which catalyzes the reduction of phenylacetyl-CoA (PA-CoA) to form 1,2-epoxyphenylacetyl-CoA. The subunit E is a reductase with a preference for NADPH and FAD, capable of reducing cytochrome c. The polypeptide is 1,2-phenylacetyl-CoA epoxidase, subunit E (paaE) (Escherichia coli (strain K12)).